Reading from the N-terminus, the 194-residue chain is FMN-dependent NADH:quinone oxidoreductase (194 aa).

Residues S10 and 90–93 (MYNL) contribute to the FMN site.

The protein belongs to the azoreductase type 1 family. In terms of assembly, homodimer. Requires FMN as cofactor.

The catalysed reaction is 2 a quinone + NADH + H(+) = 2 a 1,4-benzosemiquinone + NAD(+). The enzyme catalyses N,N-dimethyl-1,4-phenylenediamine + anthranilate + 2 NAD(+) = 2-(4-dimethylaminophenyl)diazenylbenzoate + 2 NADH + 2 H(+). Functionally, quinone reductase that provides resistance to thiol-specific stress caused by electrophilic quinones. Also exhibits azoreductase activity. Catalyzes the reductive cleavage of the azo bond in aromatic azo compounds to the corresponding amines. The protein is FMN-dependent NADH:quinone oxidoreductase of Haemophilus influenzae (strain PittEE).